A 418-amino-acid chain; its full sequence is Aspartate aminotransferase 1 (418 aa).

Lysine 264 is subject to N6-(pyridoxal phosphate)lysine.

Belongs to the class-I pyridoxal-phosphate-dependent aminotransferase family. In terms of assembly, homodimer. Pyridoxal 5'-phosphate is required as a cofactor. Nodules, roots, stems and leaves, in decreasing order of aspartate aminotransferase 1 concentration. Is the predominant aspartate aminotransferase isoenzyme in roots.

It localises to the cytoplasm. The catalysed reaction is L-aspartate + 2-oxoglutarate = oxaloacetate + L-glutamate. Its function is as follows. Important for the metabolism of amino acids and Krebs-cycle related organic acids. In plants, it is involved in nitrogen metabolism and in aspects of carbon and energy metabolism. The chain is Aspartate aminotransferase 1 (AAT-1) from Medicago sativa (Alfalfa).